The sequence spans 265 residues: MKTTTMSQLRQWKQEKRKFATLTAYDASFAQLFAEQGIQVLLVGDSLGMTLQGFDSTLPVTVADMAYHTRAVRRGAPHCLLLADMPFMSYATPELAFTHAAELMRAGANMVKLEGGSWLCDTIRMLAERAVPVCGHLGLTPQSVNIFGGYKVQGREEVAANQLLQDAIALEQAGAQLLVLECVPVELAQRVTEELTIPVIGIGAGNVTDGQILVMHDALGITGGHTPKFSKNFLAHSAGDIRAAIKLYIEEVEGGIYPAEEHTFQ.

Asp45 and Asp84 together coordinate Mg(2+). Residues 45 to 46 (DS), Asp84, and Lys112 each bind 3-methyl-2-oxobutanoate. Glu114 provides a ligand contact to Mg(2+). Glu181 acts as the Proton acceptor in catalysis.

Belongs to the PanB family. As to quaternary structure, homodecamer; pentamer of dimers. The cofactor is Mg(2+).

The protein localises to the cytoplasm. The catalysed reaction is 3-methyl-2-oxobutanoate + (6R)-5,10-methylene-5,6,7,8-tetrahydrofolate + H2O = 2-dehydropantoate + (6S)-5,6,7,8-tetrahydrofolate. It participates in cofactor biosynthesis; (R)-pantothenate biosynthesis; (R)-pantoate from 3-methyl-2-oxobutanoate: step 1/2. Catalyzes the reversible reaction in which hydroxymethyl group from 5,10-methylenetetrahydrofolate is transferred onto alpha-ketoisovalerate to form ketopantoate. The protein is 3-methyl-2-oxobutanoate hydroxymethyltransferase of Yersinia pestis bv. Antiqua (strain Antiqua).